Reading from the N-terminus, the 277-residue chain is Indole-3-glycerol phosphate synthase (277 aa).

Belongs to the TrpC family.

The catalysed reaction is 1-(2-carboxyphenylamino)-1-deoxy-D-ribulose 5-phosphate + H(+) = (1S,2R)-1-C-(indol-3-yl)glycerol 3-phosphate + CO2 + H2O. It participates in amino-acid biosynthesis; L-tryptophan biosynthesis; L-tryptophan from chorismate: step 4/5. This chain is Indole-3-glycerol phosphate synthase, found in Pseudomonas putida (strain ATCC 47054 / DSM 6125 / CFBP 8728 / NCIMB 11950 / KT2440).